Reading from the N-terminus, the 316-residue chain is Arabinooligosaccharides transport system permease protein AraP (316 aa).

7 helical membrane-spanning segments follow: residues 32–52 (VVPY…SFYP), 94–114 (TYMI…AVLL), 128–148 (ALFL…RLMF), 178–198 (MFLM…LYFL), 224–244 (FYVT…ISVI), 254–274 (FVFW…GYLY), and 283–303 (MGFG…ISIT). The ABC transmembrane type-1 domain maps to 89-304 (LQNTTTYMIL…LIIFVISITQ (216 aa)).

This sequence belongs to the binding-protein-dependent transport system permease family. MalFG subfamily. The complex is composed of two ATP-binding proteins (MsmX), two transmembrane proteins (AraP and AraQ) and a solute-binding protein (AraN).

It is found in the cell membrane. Part of the ABC transporter complex AraNPQ involved in the uptake of arabinooligosaccharides. Responsible for the translocation of the substrate across the membrane. This Halalkalibacterium halodurans (strain ATCC BAA-125 / DSM 18197 / FERM 7344 / JCM 9153 / C-125) (Bacillus halodurans) protein is Arabinooligosaccharides transport system permease protein AraP (araP).